The chain runs to 63 residues: Large ribosomal subunit protein eL37 (63 aa).

Zn(2+) is bound by residues cysteine 20, cysteine 23, cysteine 35, and cysteine 38. The segment at 20-38 adopts a C4-type zinc-finger fold; the sequence is CRRCGRHSFNVRKGYCVAC.

This sequence belongs to the eukaryotic ribosomal protein eL37 family. The cofactor is Zn(2+).

Its function is as follows. Binds to the 23S rRNA. This Ignicoccus hospitalis (strain KIN4/I / DSM 18386 / JCM 14125) protein is Large ribosomal subunit protein eL37.